We begin with the raw amino-acid sequence, 330 residues long: Major ferric iron-binding protein (330 aa).

A signal peptide spans 1-22; the sequence is MKTSIRYALLAAALTAATPALA. Positions 31, 79, 217, and 218 each coordinate Fe cation.

This sequence belongs to the bacterial solute-binding protein 1 family.

The protein resides in the periplasm. In terms of biological role, this protein may be a central component in the iron-acquisition system. The sequence is that of Major ferric iron-binding protein (fbp) from Neisseria gonorrhoeae.